The primary structure comprises 153 residues: Endoribonuclease YbeY (153 aa).

Residues His114, His118, and His124 each coordinate Zn(2+).

Belongs to the endoribonuclease YbeY family. The cofactor is Zn(2+).

The protein localises to the cytoplasm. Single strand-specific metallo-endoribonuclease involved in late-stage 70S ribosome quality control and in maturation of the 3' terminus of the 16S rRNA. The sequence is that of Endoribonuclease YbeY from Shewanella baltica (strain OS195).